Reading from the N-terminus, the 275-residue chain is Tryptophan synthase alpha chain (275 aa).

Residues Glu-49 and Asp-60 each act as proton acceptor in the active site.

The protein belongs to the TrpA family. Tetramer of two alpha and two beta chains.

The catalysed reaction is (1S,2R)-1-C-(indol-3-yl)glycerol 3-phosphate + L-serine = D-glyceraldehyde 3-phosphate + L-tryptophan + H2O. Its pathway is amino-acid biosynthesis; L-tryptophan biosynthesis; L-tryptophan from chorismate: step 5/5. Functionally, the alpha subunit is responsible for the aldol cleavage of indoleglycerol phosphate to indole and glyceraldehyde 3-phosphate. The sequence is that of Tryptophan synthase alpha chain from Psychrobacter sp. (strain PRwf-1).